The primary structure comprises 571 residues: Folylpolyglutamate synthase (571 aa).

ATP is bound at residue 122–125 (GKGS). Residues serine 146, glutamate 215, and histidine 243 each contribute to the Mg(2+) site. ATP is bound by residues arginine 363 and aspartate 385.

The protein belongs to the folylpolyglutamate synthase family. A monovalent cation serves as cofactor. As to expression, expressed in both shoots and roots, but expression in roots is higher compared with shoots. Distinct expression in the quiescent center (QC) region of the root tip. Also expressed in vascular tissues of the cotyledons and hypocotyls, and the first true leaves of 7 days old seedlings.

The protein localises to the plastid. Its subcellular location is the chloroplast. The catalysed reaction is (6S)-5,6,7,8-tetrahydrofolyl-(gamma-L-Glu)(n) + L-glutamate + ATP = (6S)-5,6,7,8-tetrahydrofolyl-(gamma-L-Glu)(n+1) + ADP + phosphate + H(+). It functions in the pathway cofactor biosynthesis; tetrahydrofolylpolyglutamate biosynthesis. Functionally, catalyzes conversion of folates to polyglutamate derivatives allowing concentration of folate compounds in the cell and the intracellular retention of these cofactors, which are important substrates for most of the folate-dependent enzymes that are involved in one-carbon transfer reactions involved in purine, pyrimidine and amino acid synthesis. Essential for organellar and whole-plant folate homeostasis. Required for postembryonic root development. Generates polyglutamylated folate cofactors to support C1 metabolism required for meristem maintenance and cell expansion during postembryonic root development. This is Folylpolyglutamate synthase from Arabidopsis thaliana (Mouse-ear cress).